An 89-amino-acid chain; its full sequence is Small ribosomal subunit protein uS15 (89 aa).

The protein belongs to the universal ribosomal protein uS15 family. As to quaternary structure, part of the 30S ribosomal subunit. Forms a bridge to the 50S subunit in the 70S ribosome, contacting the 23S rRNA.

Functionally, one of the primary rRNA binding proteins, it binds directly to 16S rRNA where it helps nucleate assembly of the platform of the 30S subunit by binding and bridging several RNA helices of the 16S rRNA. Its function is as follows. Forms an intersubunit bridge (bridge B4) with the 23S rRNA of the 50S subunit in the ribosome. This chain is Small ribosomal subunit protein uS15, found in Trichormus variabilis (strain ATCC 29413 / PCC 7937) (Anabaena variabilis).